Here is a 155-residue protein sequence, read N- to C-terminus: Transcriptional repressor NrdR (155 aa).

Residues 1–22 (MRCPFCGHDETQVKDSRPSEDG) are disordered. A zinc finger lies at 3-34 (CPFCGHDETQVKDSRPSEDGAAIRRRRLCPQC). Over residues 7–22 (GHDETQVKDSRPSEDG) the composition is skewed to basic and acidic residues. Residues 49 to 139 (ITILKRSGRR…VYRDFRETQD (91 aa)) form the ATP-cone domain.

Belongs to the NrdR family. Requires Zn(2+) as cofactor.

Negatively regulates transcription of bacterial ribonucleotide reductase nrd genes and operons by binding to NrdR-boxes. This Phenylobacterium zucineum (strain HLK1) protein is Transcriptional repressor NrdR.